Reading from the N-terminus, the 629-residue chain is DNA mismatch repair protein MutL (629 aa).

It belongs to the DNA mismatch repair MutL/HexB family.

Its function is as follows. This protein is involved in the repair of mismatches in DNA. It is required for dam-dependent methyl-directed DNA mismatch repair. May act as a 'molecular matchmaker', a protein that promotes the formation of a stable complex between two or more DNA-binding proteins in an ATP-dependent manner without itself being part of a final effector complex. This is DNA mismatch repair protein MutL from Haemophilus influenzae (strain PittGG).